Consider the following 799-residue polypeptide: MVRQLVWQRATASRRLAPKCLSPQQLFARRGLATEASAARMPPYPKIVRNLEQVRKVLGSSRALTLAEKILYAHLDNAEESLLTGTNNGKDIRGKANLKLKPDRVAMQDASAQMALLQFMSCGLPSTAVPASIHCDHMIVGERGADTDLPASIEGNREVFDFLESAAKRYGIEFWPPGAGIIHQSVLENYAAPGLMMLGTDSHTPNAGGLGAIAIGVGGADAVDALVDAPWELKAPRILGVRLEGRLSGWASPKDIILHLAGKLTVRGGTGYVIEYHGPGVETLSCTGMATCCNMGAEVGATTSVFPFSPSMVPYLQATHRGHVAQAAAEIAASGPKNLLRADDGAEYDQLITIDLSTLEPHVNGPFTPDLSVRLSDFANTVRENKWPETLGAGLIGSCTNSSYEDMTRAEDLVKQASAAGLKPKADFFITPGSEQIRATLDRDQTLASFSEAGGTVLANACGPCIGQWKRTDGVAKGEDNAIFTSYNRNFPGRNDGNRRTMNFLASPEIVTALAYSGSTTFNPMTDTLKTPSGEEFKFRPPQGSDLPSAGFADGNPALQPSAGVPDASVEVIVSPTSERLALLEPFAPFPEGELSGLKVLYKVKGQCTTDTISAAGPWLKYKGHLPNISANTLIGAVNAATGETNVAYDDAGNKHSIPDLAARWKADGIEWLVVAEDNYGEGSAREHAALQPRYLGGRIIVAKSFARIHETNLKKQGVVPLTFADKADYDRIDACDQVDTVGLYETLQSGGQGSIQLQVTKKSGEKLTIPVNHTLSKDQCGFILAGSALNLLAKRAHQ.

The N-terminal 32 residues, 1–32 (MVRQLVWQRATASRRLAPKCLSPQQLFARRGL), are a transit peptide targeting the mitochondrion. Substrate-binding positions include Gln-108 and 201–203 (DSH). Residues Cys-399, Cys-462, and Cys-465 each contribute to the [4Fe-4S] cluster site. Substrate contacts are provided by Arg-489 and Arg-494. Positions 538 to 564 (KFRPPQGSDLPSAGFADGNPALQPSAG) are disordered. Position 685-686 (685-686 (AR)) interacts with substrate.

The protein belongs to the aconitase/IPM isomerase family.

The protein localises to the mitochondrion. Functionally, has no detectable activity towards cis-acontiate or cis-homoaconitate. This chain is Putative aconitate hydratase, mitochondrial (acoB), found in Aspergillus fumigatus (strain ATCC MYA-4609 / CBS 101355 / FGSC A1100 / Af293) (Neosartorya fumigata).